We begin with the raw amino-acid sequence, 112 residues long: B3 domain-containing protein At1g43171 (112 aa).

The segment at residues 19–112 (DIVGNVALPK…FENKFIVLNF (94 aa)) is a DNA-binding region (TF-B3).

It localises to the nucleus. This is B3 domain-containing protein At1g43171 from Arabidopsis thaliana (Mouse-ear cress).